The sequence spans 173 residues: Insertion element IS150 protein InsJ (173 aa).

Belongs to the IS150/IS1296 orfA family.

This chain is Insertion element IS150 protein InsJ (insJ), found in Escherichia coli (strain K12).